Reading from the N-terminus, the 329-residue chain is Chlorophyllase-1, chloroplastic (329 aa).

The N-terminal 21 residues, 1 to 21 (MAAMVDAKPAASVQGTPLLAT), are a transit peptide targeting the chloroplast. Residues 145 to 149 (GHSRG) carry the GXSXG motif. Ser147 acts as the Nucleophile in catalysis. Residues Asp169 and His242 each act as charge relay system in the active site.

The protein belongs to the AB hydrolase superfamily. Lipase family.

The protein resides in the plastid. It is found in the chloroplast. It carries out the reaction a chlorophyll + H2O = a chlorophyllide + phytol + H(+). It functions in the pathway porphyrin-containing compound metabolism; chlorophyll degradation. In terms of biological role, catalyzes the hydrolysis of ester bond in chlorophyll to yield chlorophyllide and phytol. This is Chlorophyllase-1, chloroplastic (CHLASE1) from Citrus sinensis (Sweet orange).